Here is a 255-residue protein sequence, read N- to C-terminus: UPF0246 protein BVU_0413 (255 aa).

This sequence belongs to the UPF0246 family.

The sequence is that of UPF0246 protein BVU_0413 from Phocaeicola vulgatus (strain ATCC 8482 / DSM 1447 / JCM 5826 / CCUG 4940 / NBRC 14291 / NCTC 11154) (Bacteroides vulgatus).